Here is a 624-residue protein sequence, read N- to C-terminus: Kelch-like protein diablo (624 aa).

A disordered region spans residues 1-55 (MGDPLLPGSTGLGSGSATAATGGSVTAGSGLGNGGTGGAERPPSPARLTHTSEKH). A compositionally biased stretch (low complexity) spans 15–28 (GSATAATGGSVTAG). The segment covering 29–38 (SGLGNGGTGG) has biased composition (gly residues). The BTB domain maps to 73-140 (CDVVLNVGGR…CYTAHIIVEE (68 aa)). The BACK domain maps to 175 to 277 (CLGIRAFADT…SPKFLVGTVG (103 aa)). 6 Kelch repeats span residues 324 to 370 (VLFA…VLND), 372 to 418 (LYAV…VLDG), 419 to 465 (FLYA…VLSG), 467 to 512 (LYAI…VFNN), 514 to 559 (IYAV…VVNG), and 560 to 606 (QLYA…VMRA).

Its pathway is protein modification; protein ubiquitination. Its function is as follows. Probable substrate-specific adapter of an E3 ubiquitin-protein ligase complex which mediates the ubiquitination and subsequent proteasomal degradation of target proteins. May have a role in synapse differentiation and growth. The sequence is that of Kelch-like protein diablo from Drosophila grimshawi (Hawaiian fruit fly).